The sequence spans 325 residues: Electron transfer flavoprotein subunit alpha (325 aa).

262–290 contributes to the FAD binding site; that stretch reads LYIACGISGAIQHLAGMSNSKVIVAINKD.

This sequence belongs to the ETF alpha-subunit/FixB family. In terms of assembly, heterodimer of an alpha and a beta subunit. It depends on FAD as a cofactor.

Functionally, the electron transfer flavoprotein serves as a specific electron acceptor for other dehydrogenases. It transfers the electrons to the main respiratory chain via ETF-ubiquinone oxidoreductase (ETF dehydrogenase). The chain is Electron transfer flavoprotein subunit alpha (etfA) from Bacillus subtilis (strain 168).